Consider the following 249-residue polypeptide: Cytokine-inducible SH2-containing protein (249 aa).

Positions 41–64 (AFPEEPAPTFAAPEPDGSAPQTRD) are disordered. In terms of domain architecture, SH2 spans 84-165 (WYWGSITASE…PDVVSLIQHY (82 aa)). The 49-residue stretch at 200–248 (KLLRPLGRRDSIPSLQHLCRLRINRCTTEVERLPLPRRMGDYLKQYPFQ) folds into the SOCS box domain.

It participates in protein modification; protein ubiquitination. SOCS family proteins form part of a classical negative feedback system that regulates cytokine signal transduction. CIS is involved in the negative regulation of cytokines that signal through the JAK-STAT5 pathway such as erythropoietin, prolactin and interleukin 3 (IL3) receptor. Inhibits STAT5 trans-activation by suppressing its tyrosine phosphorylation. May be a substrate-recognition component of a SCF-like ECS (Elongin BC-CUL2/5-SOCS-box protein) E3 ubiquitin-protein ligase complex which mediates the ubiquitination and subsequent proteasomal degradation of target proteins. The chain is Cytokine-inducible SH2-containing protein (CISH) from Gallus gallus (Chicken).